The sequence spans 551 residues: Endolytic murein transglycosylase (551 aa).

Over 1–187 (MSEKSREEEK…PKKEKKSHVK (187 aa)) the chain is Cytoplasmic. The tract at residues 38-180 (VRTPANEPSA…EGAKPAKPKK (143 aa)) is disordered. 2 stretches are compositionally biased toward low complexity: residues 100 to 110 (PSSPAEESGSR) and 145 to 157 (QAGP…ATET). Residues 159–174 (DIIRDTSRRSRREGAK) are compositionally biased toward basic and acidic residues. A helical membrane pass occupies residues 188–208 (AFVISFLVFLALLSAGGYFGY). Topologically, residues 209-551 (QYVLDSLLPI…VAEHVNSKLN (343 aa)) are extracellular.

This sequence belongs to the transglycosylase MltG family.

The protein resides in the cell membrane. It catalyses the reaction a peptidoglycan chain = a peptidoglycan chain with N-acetyl-1,6-anhydromuramyl-[peptide] at the reducing end + a peptidoglycan chain with N-acetylglucosamine at the non-reducing end.. Functions as a peptidoglycan terminase that cleaves nascent peptidoglycan strands endolytically to terminate their elongation. Involved in peripheral peptidoglycan (PG) synthesis. This Streptococcus pneumoniae serotype 2 (strain D39 / NCTC 7466) protein is Endolytic murein transglycosylase.